Reading from the N-terminus, the 46-residue chain is Toxin PhcrTx2 (46 aa).

3 disulfide bridges follow: Cys-4/Cys-40, Cys-6/Cys-32, and Cys-22/Cys-41.

Belongs to the sea anemone type 3 (BDS) potassium channel toxin family.

It is found in the secreted. The protein localises to the nematocyst. Neurotoxin that induces paralysis (but not death) to U.thayeri crabs. Partially and reversibly inhibits glutamate-evoked peak currents (IC(50)=4.7 uM) but not voltage-gated potassium channel currents in cultured isolated neurons from the land snail H.aspersa. Weakly inhibits voltage-gated potassium peak currents (IC(50)=6.4 uM) and steady-state currents (IC(50)=8.2 uM) in rat dorsal root ganglion (DRG) neurons. Weakly inhibits voltage-gated sodium currents in rat DRG neurons (IC(50)=0.9 uM). In Phymanthus crucifer (Red beaded anemone), this protein is Toxin PhcrTx2.